The primary structure comprises 295 residues: Ribosomal protein L11 methyltransferase (295 aa).

Positions 150, 171, 193, and 232 each coordinate S-adenosyl-L-methionine.

Belongs to the methyltransferase superfamily. PrmA family.

The protein resides in the cytoplasm. It catalyses the reaction L-lysyl-[protein] + 3 S-adenosyl-L-methionine = N(6),N(6),N(6)-trimethyl-L-lysyl-[protein] + 3 S-adenosyl-L-homocysteine + 3 H(+). In terms of biological role, methylates ribosomal protein L11. This chain is Ribosomal protein L11 methyltransferase, found in Neisseria meningitidis serogroup C / serotype 2a (strain ATCC 700532 / DSM 15464 / FAM18).